Here is a 950-residue protein sequence, read N- to C-terminus: General transcription factor II-I repeat domain-containing protein 2 (950 aa).

GTF2I-like repeat units lie at residues 100–194 (QVDS…QPGG) and 324–418 (LSSL…SNVG).

Belongs to the TFII-I family.

It localises to the nucleus. In Bos taurus (Bovine), this protein is General transcription factor II-I repeat domain-containing protein 2 (GTF2IRD2).